Reading from the N-terminus, the 476-residue chain is Angiotensinogen (476 aa).

An N-terminal signal peptide occupies residues 1–24; that stretch reads MAPAGVSLRATILCLLAWAGLAAG. Asp-25 carries the post-translational modification Beta-decarboxylated aspartate; in form angiotensin-A. 4 N-linked (GlcNAc...) asparagine glycosylation sites follow: Asn-38, Asn-161, Asn-295, and Asn-319. Cysteines 42 and 162 form a disulfide.

This sequence belongs to the serpin family. In terms of assembly, during pregnancy, exists as a disulfide-linked 2:2 heterotetramer with the proform of PRG2 and as a complex (probably a 2:2:2 heterohexamer) with pro-PRG2 and C3dg. In terms of processing, beta-decarboxylation of Asp-25 in angiotensin-2, by mononuclear leukocytes produces alanine. The resulting peptide form, angiotensin-A, has the same affinity for the AT1 receptor as angiotensin-2, but a higher affinity for the AT2 receptor. In response to low blood pressure, the enzyme renin/REN cleaves angiotensinogen to produce angiotensin-1. Angiotensin-1 is a substrate of ACE (angiotensin converting enzyme) that removes a dipeptide to yield the physiologically active peptide angiotensin-2. Angiotensin-1 and angiotensin-2 can be further processed to generate angiotensin-3, angiotensin-4. Angiotensin 1-9 is cleaved from angiotensin-1 by ACE2 and can be further processed by ACE to produce angiotensin 1-7, angiotensin 1-5 and angiotensin 1-4. Angiotensin 1-7 has also been proposed to be cleaved from angiotensin-2 by ACE2 or from angiotensin-1 by MME (neprilysin). Post-translationally, the disulfide bond is labile. Angiotensinogen is present in the circulation in a near 40:60 ratio with the oxidized disulfide-bonded form, which preferentially interacts with receptor-bound renin. As to expression, expressed by the liver and secreted in plasma.

The protein localises to the secreted. In terms of biological role, essential component of the renin-angiotensin system (RAS), a potent regulator of blood pressure, body fluid and electrolyte homeostasis. Functionally, acts directly on vascular smooth muscle as a potent vasoconstrictor, affects cardiac contractility and heart rate through its action on the sympathetic nervous system, and alters renal sodium and water absorption through its ability to stimulate the zona glomerulosa cells of the adrenal cortex to synthesize and secrete aldosterone. Acts by binding to angiotensin receptors AGTR1 and AGTR2. Also binds the DEAR/FBXW7-AS1 receptor. Stimulates aldosterone release. Its function is as follows. Is a ligand for the G-protein coupled receptor MAS1. Has vasodilator and antidiuretic effects. Has an antithrombotic effect that involves MAS1-mediated release of nitric oxide from platelets. This chain is Angiotensinogen, found in Homo sapiens (Human).